We begin with the raw amino-acid sequence, 230 residues long: MGQKIHPLGFRIGITQKHRSSWFANSKDYPVLLQEDHKIRSFIHSKLSNASIAKIEINRKVDQVEILIATARPGIVLGKSGAGIESLRKSLSLILDPSKQLRVNVVEIADPDSEATLVAEFITQQLEKRVAFRRAVRQAVQRAQRANTQGVKIQVSGRLNGAEIARSEWVREGRVPLQTLRADIDYCHRQAHTTYGVLGVKVWLFKGEILPESKSLESAYNQETPDSTAS.

Residues 39–109 (IRSFIHSKLS…QLRVNVVEIA (71 aa)) enclose the KH type-2 domain.

It belongs to the universal ribosomal protein uS3 family. As to quaternary structure, part of the 30S ribosomal subunit.

It localises to the plastid. The protein resides in the chloroplast. This chain is Small ribosomal subunit protein uS3c (rps3), found in Pyropia yezoensis (Susabi-nori).